A 265-amino-acid polypeptide reads, in one-letter code: Glutamate racemase (265 aa).

Residues 9-10 (DS) and 41-42 (YG) each bind substrate. The Proton donor/acceptor role is filled by C73. Residue 74-75 (NT) participates in substrate binding. C180 functions as the Proton donor/acceptor in the catalytic mechanism. 181-182 (TH) is a substrate binding site.

This sequence belongs to the aspartate/glutamate racemases family.

It carries out the reaction L-glutamate = D-glutamate. Its pathway is cell wall biogenesis; peptidoglycan biosynthesis. Functionally, provides the (R)-glutamate required for cell wall biosynthesis. In Aliivibrio salmonicida (strain LFI1238) (Vibrio salmonicida (strain LFI1238)), this protein is Glutamate racemase.